We begin with the raw amino-acid sequence, 611 residues long: Rho GTPase-activating protein gacN (611 aa).

The 196-residue stretch at 24-219 folds into the Rho-GAP domain; the sequence is KTFKKILKPG…VLIEEFHVLY (196 aa). A coiled-coil region spans residues 236-499; sequence IREDKRSTSE…TKLQKSSSSS (264 aa). Residues 476-491 are compositionally biased toward basic and acidic residues; it reads NQLEKEKSKLQDELTK. The tract at residues 476 to 550 is disordered; sequence NQLEKEKSKL…TTPPPPLDED (75 aa). 2 stretches are compositionally biased toward low complexity: residues 495 to 509 and 527 to 540; these read SSSSSSSSSSSSSSS and TTTTTTTTSPAQQP.

It localises to the cytoplasm. Its function is as follows. Rho GTPase-activating protein involved in the signal transduction pathway. This Dictyostelium discoideum (Social amoeba) protein is Rho GTPase-activating protein gacN (gacN).